Here is a 223-residue protein sequence, read N- to C-terminus: MTGDRELQALLRLTAWLSPAFPIGGFAYSGGLERATADGLVIDAASLAAWIATLISHGSVWNDAVLLAESHRQQPSPAFLAEITALAEALAGSRERHQETMLLGDAFVAAARAWPDEVFERLPGKTAYPVAVGAVAGAHGIGLEKVLVAFLHAYASQAVSSGIRLGVAGQRDGVAVLAGLEEHIVEVARRAAASTLDELGSATVQADIASLRHETQTTRLFRS.

This sequence belongs to the UreF family. As to quaternary structure, ureD, UreF and UreG form a complex that acts as a GTP-hydrolysis-dependent molecular chaperone, activating the urease apoprotein by helping to assemble the nickel containing metallocenter of UreC. The UreE protein probably delivers the nickel.

It is found in the cytoplasm. In terms of biological role, required for maturation of urease via the functional incorporation of the urease nickel metallocenter. The chain is Urease accessory protein UreF from Rhizobium etli (strain CIAT 652).